We begin with the raw amino-acid sequence, 1292 residues long: DNA-directed RNA polymerase subunit beta' (1292 aa).

4 residues coordinate Zn(2+): C70, C72, C85, and C88. D532, D534, and D536 together coordinate Mg(2+). Zn(2+) is bound by residues C911, C987, C994, and C997.

The protein belongs to the RNA polymerase beta' chain family. As to quaternary structure, the RNAP catalytic core consists of 2 alpha, 1 beta, 1 beta' and 1 omega subunit. When a sigma factor is associated with the core the holoenzyme is formed, which can initiate transcription. The cofactor is Mg(2+). Zn(2+) is required as a cofactor.

It carries out the reaction RNA(n) + a ribonucleoside 5'-triphosphate = RNA(n+1) + diphosphate. Its function is as follows. DNA-dependent RNA polymerase catalyzes the transcription of DNA into RNA using the four ribonucleoside triphosphates as substrates. The chain is DNA-directed RNA polymerase subunit beta' from Mycoplasma genitalium (strain ATCC 33530 / DSM 19775 / NCTC 10195 / G37) (Mycoplasmoides genitalium).